We begin with the raw amino-acid sequence, 209 residues long: MTCGSGNGSSEQELKAIVRDLGCGPYFLGTFDKRFPGFMAPDKLACAIVNTAGRETGGEHWLAFGWNPRYNTCYLFDPFGFSDERLKQIYQFEYEGLLRRSALATKDRCITLEKSTQSVQGPRSAACGLFCCMFLHAFVHWPDRPMDGNPTMKLVTGVSNSMLQSPQVQPTLRRNQEVLYRFLNTHSSYFRSHRARIERATAFDRMDMQ.

Catalysis depends on residues His60, Asp77, and Cys127.

The protein belongs to the peptidase C5 family. In terms of assembly, interacts with protease cofactor pVI-C; this interaction is necessary for protease activation.

It localises to the virion. The protein resides in the host nucleus. It catalyses the reaction Cleaves proteins of the adenovirus and its host cell at two consensus sites: -Yaa-Xaa-Gly-Gly-|-Xaa- and -Yaa-Xaa-Gly-Xaa-|-Gly- (in which Yaa is Met, Ile or Leu, and Xaa is any amino acid).. Its activity is regulated as follows. Requires DNA and protease cofactor for maximal activation. Inside nascent virions, becomes partially activated by binding to the viral DNA, allowing it to cleave the cofactor that binds to the protease and fully activates it. Actin, like the viral protease cofactor, seems to act as a cofactor in the cleavage of cytokeratin 18 and of actin itself. Functionally, cleaves viral precursor proteins (pTP, pIIIa, pVI, pVII, pVIII, and pX) inside newly assembled particles giving rise to mature virions. Protease complexed to its cofactor slides along the viral DNA to specifically locate and cleave the viral precursors. Mature virions have a weakened organization compared to the unmature virions, thereby facilitating subsequent uncoating. Without maturation, the particle lacks infectivity and is unable to uncoat. Late in adenovirus infection, in the cytoplasm, may participate in the cytoskeleton destruction. Cleaves host cell cytoskeletal keratins K7 and K18. The chain is Protease from Homo sapiens (Human).